A 208-amino-acid polypeptide reads, in one-letter code: Putative 3-methyladenine DNA glycosylase (208 aa).

It belongs to the DNA glycosylase MPG family.

In Prosthecochloris aestuarii (strain DSM 271 / SK 413), this protein is Putative 3-methyladenine DNA glycosylase.